Here is a 167-residue protein sequence, read N- to C-terminus: MRTLMIEPLTKEAFAPFGDVIETDGSDHFMINNGSTMRFHKLATVETAEPEDKAIISIFRADALEMPLTVRMLERHPLGSQAFIPLLGNPFLIVVAPVGDAPVSGLVRAFRSNGRQGVNYHRGVWHHPVLTIEKRDDFLVVDRSGSGNNCDEHYFPEEQMLILNPHQ.

Belongs to the ureidoglycolate lyase family. As to quaternary structure, homodimer. Ni(2+) is required as a cofactor.

The catalysed reaction is (S)-ureidoglycolate = urea + glyoxylate. It functions in the pathway nitrogen metabolism; (S)-allantoin degradation. Catalyzes the catabolism of the allantoin degradation intermediate (S)-ureidoglycolate, generating urea and glyoxylate. Involved in the utilization of allantoin as nitrogen source. The sequence is that of Ureidoglycolate lyase from Pseudomonas entomophila (strain L48).